The chain runs to 297 residues: ClpXP adapter protein SpxH (297 aa).

Belongs to the SpxH family. Interacts with Spx.

The protein resides in the cytoplasm. In terms of biological role, adapter protein required for efficient degradation of Spx by ClpXP under non-stress conditions. Interaction with Spx stabilizes Spx and exposes the C-terminus of Spx for recognition and proteolysis by ClpXP. This chain is ClpXP adapter protein SpxH, found in Bacillus cereus (strain ATCC 14579 / DSM 31 / CCUG 7414 / JCM 2152 / NBRC 15305 / NCIMB 9373 / NCTC 2599 / NRRL B-3711).